Consider the following 164-residue polypeptide: MANKLFLVCAALALCFLLTNASIYRTVVEFEEDDATNPIGPKMRKCRKEFQKEQHLRACQQLMLQQARQGRSDEFDFEDDMENPQGQQQEQQLFQQCCNELRQEEPDCVCPTLKQAAKAVRLQGQHQPMQVRKIYQTAKHLPNVCDIPQVDVCPFNIPSFPSFY.

Positions 1 to 21 (MANKLFLVCAALALCFLLTNA) are cleaved as a signal peptide. 3 propeptides span residues 22-37 (SIYRTVVEFEEDDATN), 74-83 (EFDFEDDMEN), and 163-164 (FY).

Belongs to the 2S seed storage albumins family. The mature protein consists of a small and a large chain linked by disulfide bonds.

This is a 2S seed storage protein. The protein is 2S seed storage protein 1 (AT2S1) of Arabidopsis thaliana (Mouse-ear cress).